The chain runs to 510 residues: Cytochrome P450 monooxygenase ptmK (510 aa).

The helical transmembrane segment at 2–22 (IIVTFFWVGIVLSAIWTFYKV) threads the bilayer. 3 N-linked (GlcNAc...) asparagine glycosylation sites follow: Asn313, Asn408, and Asn443. Cys456 lines the heme pocket.

This sequence belongs to the cytochrome P450 family. The cofactor is heme.

The protein localises to the membrane. It functions in the pathway secondary metabolite biosynthesis. In terms of biological role, cytochrome P450 monooxygenase; part of the gene cluster that mediates the biosynthesis of the indole diterpenes penitrems. The geranylgeranyl diphosphate (GGPP) synthase ptmG catalyzes the first step in penitrem biosynthesis via conversion of farnesyl pyrophosphate and isopentyl pyrophosphate into geranylgeranyl pyrophosphate (GGPP). Condensation of indole-3-glycerol phosphate with GGPP by the prenyl transferase ptmC then forms 3-geranylgeranylindole (3-GGI). Epoxidation by the FAD-dependent monooxygenase ptmM leads to a epoxidized-GGI that is substrate of the terpene cyclase ptmB for cyclization to yield paspaline. Paspaline is subsequently converted to 13-desoxypaxilline by the cytochrome P450 monooxygenase ptmP, the latter being then converted to paxilline by the cytochrome P450 monooxygenase ptmQ. Paxilline is converted to beta-paxitriol via C-10 ketoreduction by the short-chain dehydrogenase ptmH which can be monoprenylated at the C-20 by the indole diterpene prenyltransferase ptmD. A two-step elimination (acetylation and elimination) process performed by the O-acetyltransferase ptmV and ptmI leads to the production of the prenylated form of penijanthine. The FAD-linked oxidoreductase ptmO then converts the prenylated form of penijanthine into PC-M5 which is in turn transformed into PC-M4 by the aromatic dimethylallyltransferase ptmE. Five sequential oxidative transformations performed by the cytochrome P450 monooxygenases ptmK, ptmU, ptmL, ptmN and ptmJ yield the various penitrem compounds. PtmK, ptmU and ptmM are involved in the formation of the key bicyclic ring of penitrem C via the formation of the intermediates secopenitrem D and penitrem D. PtmL catalyzes the epoxidation of penitrem D and C to yield penitrem B and F, respectively. PtmJ catalyzes the last benzylic hydroxylation to convert penitrem B to prenitrem E and penitrem F to penitrem A. This chain is Cytochrome P450 monooxygenase ptmK, found in Penicillium ochrochloron.